We begin with the raw amino-acid sequence, 518 residues long: GMP synthase [glutamine-hydrolyzing] (518 aa).

The Glutamine amidotransferase type-1 domain maps to T8–N201. Residue C85 is the Nucleophile of the active site. Catalysis depends on residues H175 and E177. Positions W202–R393 constitute a GMPS ATP-PPase domain. Residue S229–S235 coordinates ATP.

As to quaternary structure, homodimer.

The catalysed reaction is XMP + L-glutamine + ATP + H2O = GMP + L-glutamate + AMP + diphosphate + 2 H(+). Its pathway is purine metabolism; GMP biosynthesis; GMP from XMP (L-Gln route): step 1/1. Functionally, catalyzes the synthesis of GMP from XMP. This is GMP synthase [glutamine-hydrolyzing] from Bartonella henselae (strain ATCC 49882 / DSM 28221 / CCUG 30454 / Houston 1) (Rochalimaea henselae).